Here is a 457-residue protein sequence, read N- to C-terminus: Multidrug resistance protein MdtK (457 aa).

The next 12 membrane-spanning stretches (helical) occupy residues 11-31, 53-73, 93-113, 127-147, 160-180, 189-209, 243-263, 276-296, 314-334, 357-377, 387-407, and 418-438; these read LLAL…MGFV, IWLP…PVIA, WLAG…GYII, AVGY…FQVA, GMVM…IFIY, GGVG…FSMI, LPIA…ALLV, IALN…AAVT, AART…LFTV, LMLL…GSGI, IFFI…YILA, and PAGF…LMML.

Belongs to the multi antimicrobial extrusion (MATE) (TC 2.A.66.1) family. MdtK subfamily.

It localises to the cell inner membrane. Multidrug efflux pump that functions probably as a Na(+)/drug antiporter. The chain is Multidrug resistance protein MdtK from Enterobacter sp. (strain 638).